The chain runs to 124 residues: Small ribosomal subunit protein bS16 (124 aa).

Residues 88–124 (VPEQTKQAQPKAKAQERLREAEEKARAAAEAAASAEG) are disordered. Basic and acidic residues predominate over residues 100-114 (KAQERLREAEEKARA). The span at 115–124 (AAEAAASAEG) shows a compositional bias: low complexity.

It belongs to the bacterial ribosomal protein bS16 family.

The chain is Small ribosomal subunit protein bS16 from Rhodospirillum rubrum (strain ATCC 11170 / ATH 1.1.1 / DSM 467 / LMG 4362 / NCIMB 8255 / S1).